A 187-amino-acid chain; its full sequence is Photosystem I assembly protein Ycf4 (187 aa).

Transmembrane regions (helical) follow at residues 23-43 and 70-90; these read INYFWSFSIFFGAFGFLIVGI and FYGIAGIFLSFYLWFTMILGV.

The protein belongs to the Ycf4 family.

The protein localises to the plastid. Its subcellular location is the chloroplast thylakoid membrane. In terms of biological role, seems to be required for the assembly of the photosystem I complex. This is Photosystem I assembly protein Ycf4 from Chara vulgaris (Common stonewort).